The chain runs to 294 residues: Eukaryotic translation initiation factor 3 subunit F (294 aa).

The MPN domain maps to 20-163 (VTVTAQALFQ…IDPSKNSGNC (144 aa)).

It belongs to the eIF-3 subunit F family. In terms of assembly, component of the eukaryotic translation initiation factor 3 (eIF-3) complex.

The protein localises to the cytoplasm. Functionally, component of the eukaryotic translation initiation factor 3 (eIF-3) complex, which is involved in protein synthesis of a specialized repertoire of mRNAs and, together with other initiation factors, stimulates binding of mRNA and methionyl-tRNAi to the 40S ribosome. The eIF-3 complex specifically targets and initiates translation of a subset of mRNAs involved in cell proliferation. The protein is Eukaryotic translation initiation factor 3 subunit F of Yarrowia lipolytica (strain CLIB 122 / E 150) (Yeast).